Consider the following 193-residue polypeptide: Glycerol-3-phosphate acyltransferase (193 aa).

4 helical membrane passes run 2-22 (LIAL…GLIV), 76-96 (VPIH…FPVF), 112-132 (LLFY…VFLF), and 152-172 (CLFV…AFVI).

This sequence belongs to the PlsY family. As to quaternary structure, probably interacts with PlsX.

It localises to the cell membrane. It catalyses the reaction an acyl phosphate + sn-glycerol 3-phosphate = a 1-acyl-sn-glycero-3-phosphate + phosphate. It functions in the pathway lipid metabolism; phospholipid metabolism. Functionally, catalyzes the transfer of an acyl group from acyl-phosphate (acyl-PO(4)) to glycerol-3-phosphate (G3P) to form lysophosphatidic acid (LPA). This enzyme utilizes acyl-phosphate as fatty acyl donor, but not acyl-CoA or acyl-ACP. This chain is Glycerol-3-phosphate acyltransferase, found in Bacillus velezensis (strain DSM 23117 / BGSC 10A6 / LMG 26770 / FZB42) (Bacillus amyloliquefaciens subsp. plantarum).